Reading from the N-terminus, the 494-residue chain is Fumigaclavine B O-acetyltransferase easN (494 aa).

This sequence belongs to the fumigaclavine B O-acetyltransferase family. Monomer.

It catalyses the reaction fumigaclavine B + acetyl-CoA = fumigaclavine A + CoA. The protein operates within alkaloid biosynthesis; ergot alkaloid biosynthesis. Its function is as follows. Fumigaclavine B O-acetyltransferase; part of the gene cluster that mediates the biosynthesis of fumiclavanine C, a fungal ergot alkaloid. DmaW catalyzes the first step of ergot alkaloid biosynthesis by condensing dimethylallyl diphosphate (DMAP) and tryptophan to form 4-dimethylallyl-L-tryptophan. The second step is catalyzed by the methyltransferase easF that methylates 4-dimethylallyl-L-tryptophan in the presence of S-adenosyl-L-methionine, resulting in the formation of 4-dimethylallyl-L-abrine. The catalase easC and the FAD-dependent oxidoreductase easE then transform 4-dimethylallyl-L-abrine to chanoclavine-I which is further oxidized by EasD in the presence of NAD(+), resulting in the formation of chanoclavine-I aldehyde. EasA reduces chanoclavine-I aldehyde to dihydrochanoclavine-I aldehyde that spontaneously dehydrates to form 6,8-dimethyl-6,7-didehydroergoline. EasG then catalyzes the reduction of 6,8-dimethyl-6,7-didehydroergoline to form festuclavine. Hydrolysis of festuclavine by easM then leads to the formation of fumigaclavine B which is in turn acetylated by easN to fumigaclavine A. Finally, easL catalyzes the conversion of fumigaclavine A into fumigaclavine C by attaching a dimethylallyl moiety to C-2 of the indole nucleus. The polypeptide is Fumigaclavine B O-acetyltransferase easN (Aspergillus fumigatus (strain ATCC MYA-4609 / CBS 101355 / FGSC A1100 / Af293) (Neosartorya fumigata)).